The following is a 358-amino-acid chain: Carbamoyl phosphate synthase small chain (358 aa).

Positions Met1–Val168 are CPSase. L-glutamine is bound by residues Ser45, Gly219, and Gly221. The region spanning Asn171–Lys357 is the Glutamine amidotransferase type-1 domain. Cys246 functions as the Nucleophile in the catalytic mechanism. Positions 247, 250, 288, 290, and 291 each coordinate L-glutamine. Residues His330 and Asp332 contribute to the active site.

This sequence belongs to the CarA family. In terms of assembly, composed of two chains; the small (or glutamine) chain promotes the hydrolysis of glutamine to ammonia, which is used by the large (or ammonia) chain to synthesize carbamoyl phosphate. Tetramer of heterodimers (alpha,beta)4.

The enzyme catalyses hydrogencarbonate + L-glutamine + 2 ATP + H2O = carbamoyl phosphate + L-glutamate + 2 ADP + phosphate + 2 H(+). The catalysed reaction is L-glutamine + H2O = L-glutamate + NH4(+). The protein operates within amino-acid biosynthesis; L-arginine biosynthesis; carbamoyl phosphate from bicarbonate: step 1/1. Its pathway is pyrimidine metabolism; UMP biosynthesis via de novo pathway; (S)-dihydroorotate from bicarbonate: step 1/3. Functionally, small subunit of the glutamine-dependent carbamoyl phosphate synthetase (CPSase). CPSase catalyzes the formation of carbamoyl phosphate from the ammonia moiety of glutamine, carbonate, and phosphate donated by ATP, constituting the first step of 2 biosynthetic pathways, one leading to arginine and/or urea and the other to pyrimidine nucleotides. The small subunit (glutamine amidotransferase) binds and cleaves glutamine to supply the large subunit with the substrate ammonia. In Streptococcus agalactiae serotype III (strain NEM316), this protein is Carbamoyl phosphate synthase small chain.